The chain runs to 202 residues: uncharacterized protein (202 aa).

K136 participates in a covalent cross-link: Isoglutamyl lysine isopeptide (Lys-Gln) (interchain with Q-Cter in protein Pup).

This is an uncharacterized protein from Mycobacterium tuberculosis (strain CDC 1551 / Oshkosh).